Reading from the N-terminus, the 250-residue chain is Cell division protein ZapD (250 aa).

The protein belongs to the ZapD family. In terms of assembly, interacts with FtsZ.

The protein resides in the cytoplasm. Its function is as follows. Cell division factor that enhances FtsZ-ring assembly. Directly interacts with FtsZ and promotes bundling of FtsZ protofilaments, with a reduction in FtsZ GTPase activity. The chain is Cell division protein ZapD from Bordetella petrii (strain ATCC BAA-461 / DSM 12804 / CCUG 43448).